The sequence spans 189 residues: MSSTSSPTYTISKTLNTNYPLIDNDPHFRRVIGYARPSDYVHGTVAGAAGPGLLYLMEKMAPSGVGKGGFPKAMRLATAVGFFGGFLYFYQRSILRFYGMSENAREVQMDMREMVDKVKAGQPLYGVSTLPVDVQGMAARQSRYSALFFAVLPWFNFVNHNQHGVDTAKYYQQAERELEAERLGKGSSS.

A helical transmembrane segment spans residues 73–88 (AMRLATAVGFFGGFLY).

In terms of assembly, complex I is composed of about 40 different subunits. In terms of processing, the N-terminus is blocked.

Its subcellular location is the mitochondrion inner membrane. The enzyme catalyses a ubiquinone + NADH + 5 H(+)(in) = a ubiquinol + NAD(+) + 4 H(+)(out). Functionally, transfer of electrons from NADH to the respiratory chain. The immediate electron acceptor for the enzyme is believed to be ubiquinone. This is NADH-ubiquinone oxidoreductase 20.9 kDa subunit (nuo20.9) from Neurospora crassa (strain ATCC 24698 / 74-OR23-1A / CBS 708.71 / DSM 1257 / FGSC 987).